A 697-amino-acid chain; its full sequence is Elongation factor G 2 (697 aa).

The region spanning 5-280 is the tr-type G domain; it reads SKYRNIGIFA…AVVDYLPAPD (276 aa). Residues 14-21, 78-82, and 132-135 each bind GTP; these read AHVDAGKT, DTPGH, and NKLD.

Belongs to the TRAFAC class translation factor GTPase superfamily. Classic translation factor GTPase family. EF-G/EF-2 subfamily.

The protein resides in the cytoplasm. In terms of biological role, catalyzes the GTP-dependent ribosomal translocation step during translation elongation. During this step, the ribosome changes from the pre-translocational (PRE) to the post-translocational (POST) state as the newly formed A-site-bound peptidyl-tRNA and P-site-bound deacylated tRNA move to the P and E sites, respectively. Catalyzes the coordinated movement of the two tRNA molecules, the mRNA and conformational changes in the ribosome. In Shewanella denitrificans (strain OS217 / ATCC BAA-1090 / DSM 15013), this protein is Elongation factor G 2.